We begin with the raw amino-acid sequence, 306 residues long: 3-methyl-2-oxobutanoate hydroxymethyltransferase (306 aa).

Mg(2+)-binding residues include D53 and D96. Residues 53-54 (DS), D96, and K126 each bind 3-methyl-2-oxobutanoate. Mg(2+) is bound at residue E128. The active-site Proton acceptor is the E195.

It belongs to the PanB family. As to quaternary structure, homodecamer; pentamer of dimers. It depends on Mg(2+) as a cofactor.

Its subcellular location is the cytoplasm. It catalyses the reaction 3-methyl-2-oxobutanoate + (6R)-5,10-methylene-5,6,7,8-tetrahydrofolate + H2O = 2-dehydropantoate + (6S)-5,6,7,8-tetrahydrofolate. The protein operates within cofactor biosynthesis; (R)-pantothenate biosynthesis; (R)-pantoate from 3-methyl-2-oxobutanoate: step 1/2. Its function is as follows. Catalyzes the reversible reaction in which hydroxymethyl group from 5,10-methylenetetrahydrofolate is transferred onto alpha-ketoisovalerate to form ketopantoate. The sequence is that of 3-methyl-2-oxobutanoate hydroxymethyltransferase from Anaeromyxobacter dehalogenans (strain 2CP-1 / ATCC BAA-258).